The following is a 380-amino-acid chain: Magnesium-protoporphyrin IX monomethyl ester [oxidative] cyclase 1 (380 aa).

It belongs to the AcsF family. Fe cation serves as cofactor.

The enzyme catalyses Mg-protoporphyrin IX 13-monomethyl ester + 3 NADPH + 3 O2 + 2 H(+) = 3,8-divinyl protochlorophyllide a + 3 NADP(+) + 5 H2O. Its pathway is porphyrin-containing compound metabolism; chlorophyll biosynthesis (light-independent). Its function is as follows. Catalyzes the formation of the isocyclic ring in chlorophyll biosynthesis. Mediates the cyclase reaction, which results in the formation of divinylprotochlorophyllide (Pchlide) characteristic of all chlorophylls from magnesium-protoporphyrin IX 13-monomethyl ester (MgPMME). The polypeptide is Magnesium-protoporphyrin IX monomethyl ester [oxidative] cyclase 1 (Thermosynechococcus vestitus (strain NIES-2133 / IAM M-273 / BP-1)).